Consider the following 466-residue polypeptide: Transcription factor SOX-10 (466 aa).

5 disordered regions span residues 1 to 67 (MAEE…DDDK), 160 to 198 (LRMQ…TDQG), 213 to 275 (DHRH…DFGN), 355 to 375 (QVKT…QPST), and 433 to 466 (RPLY…LSRP). Over residues 23-32 (LSPSSAPSLG) the composition is skewed to low complexity. Serine 24 is modified (phosphoserine). The interval 62–102 (EADDDKFPVCIREAVSQVLSGYDWTLVPMPVRVNGASKSKP) is dimerization (DIM). The HMG box DNA-binding region spans 104-172 (VKRPMNAFMV…QHKKDHPDYK (69 aa)). Composition is skewed to basic and acidic residues over residues 160-173 (LRMQ…DYKY) and 254-271 (ADPK…KPHI). The interval 228-310 (PEHPSGQSHG…LPPNGHPGHV (83 aa)) is transactivation domain (TAM). The interval 353–466 (KAQVKTETTG…QPVYTTLSRP (114 aa)) is transactivation domain (TAC). Over residues 440-466 (SDPSPSGPQSHSPTHWEQPVYTTLSRP) the composition is skewed to polar residues.

Monomer. Interacts with Armcx3 at the mitochondrial outer membrane surface. Interacts with PAX3. Predominant expression in glial cells of the nervous system.

It localises to the cytoplasm. Its subcellular location is the nucleus. The protein resides in the mitochondrion outer membrane. Functionally, transcription factor that plays a central role in developing and mature glia. Specifically activates expression of myelin genes, during oligodendrocyte (OL) maturation, such as DUSP15 and MYRF, thereby playing a central role in oligodendrocyte maturation and CNS myelination. Once induced, MYRF cooperates with SOX10 to implement the myelination program. Transcriptional activator of MITF, acting synergistically with PAX3. Transcriptional activator of MBP, via binding to the gene promoter. In Rattus norvegicus (Rat), this protein is Transcription factor SOX-10 (Sox10).